A 447-amino-acid polypeptide reads, in one-letter code: Ribulose bisphosphate carboxylase large chain (447 aa).

Substrate contacts are provided by Asn-89 and Thr-139. Lys-141 functions as the Proton acceptor in the catalytic mechanism. Lys-143 is a binding site for substrate. Residues Lys-167, Asp-169, and Glu-170 each coordinate Mg(2+). Lys-167 is modified (N6-carboxylysine). The Proton acceptor role is filled by His-260. Residues Arg-261, His-293, and Ser-345 each contribute to the substrate site.

The protein belongs to the RuBisCO large chain family. Type I subfamily. Heterohexadecamer of 8 large chains and 8 small chains; disulfide-linked. The disulfide link is formed within the large subunit homodimers. It depends on Mg(2+) as a cofactor. In terms of processing, the disulfide bond which can form in the large chain dimeric partners within the hexadecamer appears to be associated with oxidative stress and protein turnover.

The protein localises to the plastid. Its subcellular location is the chloroplast. It carries out the reaction 2 (2R)-3-phosphoglycerate + 2 H(+) = D-ribulose 1,5-bisphosphate + CO2 + H2O. The catalysed reaction is D-ribulose 1,5-bisphosphate + O2 = 2-phosphoglycolate + (2R)-3-phosphoglycerate + 2 H(+). RuBisCO catalyzes two reactions: the carboxylation of D-ribulose 1,5-bisphosphate, the primary event in carbon dioxide fixation, as well as the oxidative fragmentation of the pentose substrate in the photorespiration process. Both reactions occur simultaneously and in competition at the same active site. The chain is Ribulose bisphosphate carboxylase large chain from Convolvulus tricolor (Dwarf morning glory).